The following is a 466-amino-acid chain: DNA polymerase delta subunit 3 (466 aa).

N-acetylalanine is present on Ala2. 2 disordered regions span residues 169 to 188 (NNEL…VSQQ) and 199 to 232 (KAAA…PGKG). Basic and acidic residues predominate over residues 206-217 (ETNKETKTEAKE). Lys258 participates in a covalent cross-link: Glycyl lysine isopeptide (Lys-Gly) (interchain with G-Cter in SUMO); alternate. Lys258 participates in a covalent cross-link: Glycyl lysine isopeptide (Lys-Gly) (interchain with G-Cter in SUMO2); alternate. A Glycyl lysine isopeptide (Lys-Gly) (interchain with G-Cter in SUMO2) cross-link involves residue Lys261. 2 disordered regions span residues 274-393 (KLAT…KTYL) and 406-466 (ESES…FQRK). Thr277 carries the post-translational modification Phosphothreonine. Over residues 286–296 (KKAEPVKVLQK) the composition is skewed to basic and acidic residues. Ser307 is modified (phosphoserine). A compositionally biased stretch (pro residues) spans 349–361 (PSPPPPPSPPLEP). 2 positions are modified to phosphoserine: Ser407 and Ser409. At Thr411 the chain carries Phosphothreonine. Position 413 is a phosphoserine (Ser413). Positions 432-441 (VKKEPREERK) are enriched in basic and acidic residues. Lys433 participates in a covalent cross-link: Glycyl lysine isopeptide (Lys-Gly) (interchain with G-Cter in SUMO); alternate. Residue Lys433 forms a Glycyl lysine isopeptide (Lys-Gly) (interchain with G-Cter in SUMO2); alternate linkage. Residues 455–466 (RQVSITGFFQRK) are compositionally biased toward polar residues. The PIP-box signature appears at 456–463 (QVSITGFF). Ser458 carries the phosphoserine modification.

Component of both the DNA polymerase delta and DNA polymerase zeta complexes. The tetrameric DNA polymerase delta complex (Pol-delta4), which consists of POLD1/p125, POLD2/p50, POLD3/p66/p68 and POLD4/p12, with POLD1 bearing DNA polymerase and 3' to 5' proofreading exonuclease activities. Within this complex, directly interacts with POLD2. Following stress caused by DNA damaging agents or by replication stress, POLD4 is degraded and Pol-delta4 is converted into a trimeric form of the complex (Pol-delta3), which consists of POLD1, POLD2 and POLD3. Pol-delta3 is the major form occurring at S phase replication sites, as well as DNA damage sites. Directly interacts with PCNA, as do POLD1 and POLD4; this interaction stimulates Pol-delta polymerase activity. POLD3 phosphorylation at Ser-458 impairs PCNA binding. Component of the DNA polymerase zeta complex (POLZ), which consists of REV3L, MAD2L2, POLD2 and POLD3, with REV3L bearing DNA polymerase catalytic activity. The DNA polymerase delta complex interacts with POLDIP2; this interaction is probably mediated through direct binding to POLD2. Post-translationally, ubiquitinated, but not targeted to the proteasome. Sumoylated. Sumoylation with SUMO3 may be predominant. In terms of processing, phosphorylation at Ser-458 is catalyzed in vitro by PKA. It is thought to decrease the affinity for PCNA and Pol-delta4 processivity. Can also be phosphorylated in vitro by CDK1-cyclin-A complex, as well as CDK2-cyclin-A and CDK2-cyclin-E complexes. PCNA interferes with CDK-cyclin phosphorylation.

Its subcellular location is the cytoplasm. The protein resides in the nucleus. Accessory component of both the DNA polymerase delta complex and the DNA polymerase zeta complex. As a component of the trimeric and tetrameric DNA polymerase delta complexes (Pol-delta3 and Pol-delta4, respectively), plays a role in high fidelity genome replication, including in lagging strand synthesis, and repair. Required for optimal Pol-delta activity. Stabilizes the Pol-delta complex and plays a major role in Pol-delta stimulation by PCNA. Pol-delta3 and Pol-delta4 are characterized by the absence or the presence of POLD4. They exhibit differences in catalytic activity. Most notably, Pol-delta3 shows higher proofreading activity than Pol-delta4. Although both Pol-delta3 and Pol-delta4 process Okazaki fragments in vitro, Pol-delta3 may also be better suited to fulfill this task, exhibiting near-absence of strand displacement activity compared to Pol-delta4 and stalling on encounter with the 5'-blocking oligonucleotides. Pol-delta3 idling process may avoid the formation of a gap, while maintaining a nick that can be readily ligated. Along with DNA polymerase kappa, DNA polymerase delta carries out approximately half of nucleotide excision repair (NER) synthesis following UV irradiation. In this context, POLD3, along with PCNA and RFC1-replication factor C complex, is required to recruit POLD1, the catalytic subunit of the polymerase delta complex, to DNA damage sites. Under conditions of DNA replication stress, required for the repair of broken replication forks through break-induced replication (BIR). Involved in the translesion synthesis (TLS) of templates carrying O6-methylguanine or abasic sites performed by Pol-delta4, independently of DNA polymerase zeta (REV3L) or eta (POLH). Facilitates abasic site bypass by DNA polymerase delta by promoting extension from the nucleotide inserted opposite the lesion. Also involved in TLS, as a component of the tetrameric DNA polymerase zeta complex. Along with POLD2, dramatically increases the efficiency and processivity of DNA synthesis of the DNA polymerase zeta complex compared to the minimal zeta complex, consisting of only REV3L and REV7. This is DNA polymerase delta subunit 3 (POLD3) from Homo sapiens (Human).